The primary structure comprises 256 residues: uncharacterized protein (256 aa).

9–33 is an NADP(+) binding site; sequence VTGGGQGIGAAIAQLFAENGMKVVI. S140 serves as a coordination point for substrate. Y153 functions as the Proton acceptor in the catalytic mechanism.

This sequence belongs to the short-chain dehydrogenases/reductases (SDR) family.

This is an uncharacterized protein from Thermotoga maritima (strain ATCC 43589 / DSM 3109 / JCM 10099 / NBRC 100826 / MSB8).